The sequence spans 29 residues: Cytolysin Uc-1 (29 aa).

Polar residues predominate over residues 1–15 (DEQTGSKGPNENLPS). The tract at residues 1–29 (DEQTGSKGPNENLPSQKDLXAKASXLTEV) is disordered.

It is found in the secreted. Its subcellular location is the nematocyst. It localises to the target cell membrane. In terms of biological role, pore-forming toxin that lyses bovine erythrocytes at nanomolar concentrations. Is devoid of enzymatic activity. Binds to monolayers and efficiently permeabilizes small lipid vesicles composed of sphingomyelin and cholesterol. The cytolytic activity is not prevented by cholesterol or sphingomyelin. The protein is Cytolysin Uc-1 of Urticina crassicornis (Mottled anemone).